The sequence spans 514 residues: Cilia- and flagella-associated protein 53 (514 aa).

Coiled-coil stretches lie at residues 91–176 (VINT…EKKV) and 205–478 (WEED…AGLA). 2 disordered regions span residues 261-296 (QNKA…QDKI) and 495-514 (QALS…KPPL).

It belongs to the CFAP53 family. As to quaternary structure, microtubule inner protein component of sperm flagellar doublet microtubules. Interacts with PIERCE1 and PIERCE2; the interactions link outer dynein arms docking complex (ODA-DC) to the internal microtubule inner proteins (MIP) in cilium axoneme. Interacts with CCDC38. Interacts with CCDC42 and IFT88. Interacts with centriolar satellite proteins PIBF1/CEP90 and PCM1. Interacts with dyneins DNAIC1, DNAIC2 AND DNAH11 and with ODA-DC component ODAD4/TTC25. In terms of tissue distribution, expressed predominantly in testis (at protein level). In embryos at 8 dpc, specifically expressed in the node, in particular within the pit cells that are located at the center of the node and have rotating monocilia on their apical surface. In the adult, expressed in epithelial cells of the trachea, brain ventricles, oviduct and testis.

It localises to the cytoplasm. Its subcellular location is the cytoskeleton. It is found in the cilium axoneme. The protein resides in the flagellum axoneme. The protein localises to the microtubule organizing center. It localises to the centrosome. Its subcellular location is the centriolar satellite. It is found in the spindle pole. Its function is as follows. Microtubule inner protein (MIP) part of the dynein-decorated doublet microtubules (DMTs) in cilia axoneme, which is required for motile cilia beating. Regulates motility patterns of both 9+0 and 9+2 motile cilia through differential localization and recruitment of axonemal dynein components. Required for centriolar satellite integrity and non-motile cilium assembly. Required for motile cilium formation. Through its role in the beating of primary cilia, involved in the establishment of organ laterality during embryogenesis. Required for sperm flagellum biogenesis and is essential for male fertility. The protein is Cilia- and flagella-associated protein 53 of Mus musculus (Mouse).